Consider the following 382-residue polypeptide: MNDRGELFKPIKVGNMLLQHRIVHAPMTRLRATDYGKITGLMVEYYSQRSMIPGTLLIADATFVGEKSGGFPNNPRCFTKEQAESWIPLVEAVHKNKSFLFIQFWPLPGDLKDEYRNDLEKMQKITYSDCPQDPGGLPAGIHSFDAVQGVEVYKKKYMSKRDIQEHIQDFVNAADLAVNIAKADGVEIHQVNGFLLDRFVLGGFGDQCDPEYRGSIENRCRFPLEVLEAVTRKIGQERVGYRISPFSGWMQKIDFMEVNIYLMSEIAKRFPKLAYIHAIEPRKYWSGHKLVSSEQNTSFLQKYWKGPFITAGGYDPETAVQAANERGVLVAFGRNFIANPDLVFRIKHHIPLNKWDRSSFYLPKTEKGYTDYPFSKEFLQSK.

Residues Thr28 and His189 each contribute to the FMN site. Residues His189 and Asn192 each coordinate substrate. FMN-binding residues include Arg242 and Arg334. Residue Tyr361 participates in substrate binding.

Belongs to the NADH:flavin oxidoreductase/NADH oxidase family. As to quaternary structure, homodimer or heterodimer. FMN serves as cofactor.

The catalysed reaction is A + NADPH + H(+) = AH2 + NADP(+). The sequence is that of Putative NADPH dehydrogenase C5H10.04 from Schizosaccharomyces pombe (strain 972 / ATCC 24843) (Fission yeast).